The chain runs to 185 residues: Intraflagellar transport protein 22 homolog (185 aa).

GTP is bound by residues 10–17, 63–67, and 123–126; these read GPCESGKT, DCGGD, and HKPG. Ser137 is modified (phosphoserine).

The protein belongs to the small GTPase superfamily. Rab family. Component of the IFT complex B, at least composed of IFT20, IFT22, IFT25, IFT27, IFT46, IFT52, TRAF3IP1/IFT54, IFT57, IFT74, IFT80, IFT81, and IFT88. Interacts with IFT88. Interacts with CFAP61.

The protein localises to the cell projection. It localises to the cilium. In terms of biological role, small GTPase-like component of the intraflagellar transport (IFT) complex B. The sequence is that of Intraflagellar transport protein 22 homolog (IFT22) from Homo sapiens (Human).